The following is a 70-amino-acid chain: Large ribosomal subunit protein bL31 (70 aa).

Residues cysteine 16, cysteine 18, cysteine 37, and cysteine 40 each coordinate Zn(2+).

It belongs to the bacterial ribosomal protein bL31 family. Type A subfamily. As to quaternary structure, part of the 50S ribosomal subunit. Requires Zn(2+) as cofactor.

Functionally, binds the 23S rRNA. In Psychromonas ingrahamii (strain DSM 17664 / CCUG 51855 / 37), this protein is Large ribosomal subunit protein bL31.